The primary structure comprises 149 residues: Oocyte-expressed protein (149 aa).

One can recognise a KH; atypical domain in the interval 49–110 (PLVFYLEAWL…RVQNRVKSVL (62 aa)).

The protein belongs to the KHDC1 family. As to quaternary structure, component of the subcortical maternal complex (SCMC), at least composed of NLRP5, KHDC3, OOEP, and TLE6. Within the complex, interacts with NLRP5, KHDC3 and TLE6. As part of the SCMC interacts with the SCMC-associated protein NLRP4F. The SCMC may facilitate translocation of its components between the nuclear and cytoplasmic compartments. Forms a scaffold complex with KHDC3/FILIA, and interacts with BLM and TRIM25 at DNA replication forks.

The protein localises to the cytoplasm. It localises to the nucleus. Functionally, component of the subcortical maternal complex (SCMC), a multiprotein complex that plays a key role in early embryonic development. The SCMC complex is a structural constituent of cytoplasmic lattices, which consist in fibrous structures found in the cytoplasm of oocytes and preimplantation embryos. They are required to store maternal proteins critical for embryonic development, such as proteins that control epigenetic reprogramming of the preimplantation embryo, and prevent their degradation or activation. As part of the OOEP-KHDC3 scaffold, recruits BLM and TRIM25 to DNA replication forks, thereby promoting the ubiquitination of BLM by TRIM25, enhancing BLM retainment at replication forks and therefore promoting stalled replication fork restart. Positively regulates the homologous recombination-mediated DNA double-strand break (DSB) repair pathway by regulating ATM activation and RAD51 recruitment to DSBs in oocytes. Thereby contributes to oocyte survival and the resumption and completion of meiosis. This Canis lupus familiaris (Dog) protein is Oocyte-expressed protein (OOEP).